The chain runs to 337 residues: Cysteinyl leukotriene receptor 1 (337 aa).

Residues 1-28 (MDETGNLTVSSATCHDTIDDFRNQVYST) are Extracellular-facing. The N-linked (GlcNAc...) asparagine glycan is linked to asparagine 6. The helical transmembrane segment at 29–49 (LYSMISVVGFFGNGFVLYVLI) threads the bilayer. The Cytoplasmic portion of the chain corresponds to 50–57 (KTYHKKSA). The chain crosses the membrane as a helical span at residues 58 to 78 (FQVYMINLAVADLLCVCTLPL). Residues 79-106 (RVVYYVHKGIWLFGDFLCRLSTYALYVN) lie on the Extracellular side of the membrane. A disulfide bridge connects residues cysteine 96 and cysteine 173. Residues 107-127 (LYCSIFFMTAMSFFRCIAIVF) form a helical membrane-spanning segment. Residues 128–141 (PVQNINLVTQKKAR) lie on the Cytoplasmic side of the membrane. Residues 142–162 (FVCVGIWIFVILTSSPFLMAK) traverse the membrane as a helical segment. Topologically, residues 163-193 (PQKDEKNNTKCFEPPQDNQTKNHVLVLHYVS) are extracellular. N-linked (GlcNAc...) asparagine glycosylation is found at asparagine 169 and asparagine 180. A helical membrane pass occupies residues 194-214 (LFVGFIIPFVIIIVCYTMIIL). Over 215–230 (TLLKKSMKKNLSSHKK) the chain is Cytoplasmic. The helical transmembrane segment at 231–251 (AIGMIMVVTAAFLVSFMPYHI) threads the bilayer. Topologically, residues 252-276 (QRTIHLHFLHNETKPCDSVLRMQKS) are extracellular. N-linked (GlcNAc...) asparagine glycosylation occurs at asparagine 262. A helical membrane pass occupies residues 277-297 (VVITLSLAASNCCFDPLLYFF). Over 298–337 (SGGNFRKRLSTFRKHSLSSVTYVPRKKASLPEKGEEICKV) the chain is Cytoplasmic.

This sequence belongs to the G-protein coupled receptor 1 family. In terms of tissue distribution, widely expressed, with highest levels in spleen and peripheral blood leukocytes. Lower expression in several tissues, such as lung (mostly in smooth muscle bundles and alveolar macrophages), placenta, small intestine, pancreas, colon and heart.

The protein localises to the cell membrane. Receptor for cysteinyl leukotrienes mediating bronchoconstriction of individuals with and without asthma. Stimulation by LTD4 results in the contraction and proliferation of smooth muscle, edema, eosinophil migration and damage to the mucus layer in the lung. This response is mediated via a G-protein that activates a phosphatidylinositol-calcium second messenger system. The rank order of affinities for the leukotrienes is LTD4 &gt;&gt; LTE4 = LTC4 &gt;&gt; LTB4. This is Cysteinyl leukotriene receptor 1 (CYSLTR1) from Homo sapiens (Human).